The primary structure comprises 491 residues: MEIRGSSQTAAAWAGEAIALGFFESETVLTVPENLTALDERLSGVIAEVIAETEFKGKSGKLSVTRLGSGAPIKKLLLVGLGNAEKWNSAVLRSTAAAIARAVKGDKAITTLGLQLPVAETEAITAQMVTEGMYLGFYEDNRFKSEQKDPPALEAVEILGIGDQPAAIALGTSLCEGVIYARELVNAPANIINPVTLAASVESLASTYGLELNILEEADCEAAGMGSFLGVAAASDLPPKFIHLVYKPLGTPRKKVAIVGKGLTFDSGGYNIKPSGPSIAMMKMDMGGAAATFGAAKAIAELKPDVEVHFISAATENMISGRGMRPGDILTASNGKTIEVNNTDAEGRLTLADALVYAEKLGVEAIVDIATLTGACVIALGDDICGLWSDNDDLAQAIATASEKAGEKFWQMPLEEKYFEGLKSPIADMKNTGPREGGSITAALFLKEFVENTPWAHLDIAGPAWSEKDADIYSKGGTGFPVRTLVHWVLS.

Residues K261 and D266 each coordinate Mn(2+). K273 is a catalytic residue. The Mn(2+) site is built by D285, D344, and E346. The active site involves R348.

The protein belongs to the peptidase M17 family. Requires Mn(2+) as cofactor.

It is found in the cytoplasm. The catalysed reaction is Release of an N-terminal amino acid, Xaa-|-Yaa-, in which Xaa is preferably Leu, but may be other amino acids including Pro although not Arg or Lys, and Yaa may be Pro. Amino acid amides and methyl esters are also readily hydrolyzed, but rates on arylamides are exceedingly low.. The enzyme catalyses Release of an N-terminal amino acid, preferentially leucine, but not glutamic or aspartic acids.. Functionally, presumably involved in the processing and regular turnover of intracellular proteins. Catalyzes the removal of unsubstituted N-terminal amino acids from various peptides. In Picosynechococcus sp. (strain ATCC 27264 / PCC 7002 / PR-6) (Agmenellum quadruplicatum), this protein is Probable cytosol aminopeptidase.